Consider the following 440-residue polypeptide: Tyrosine--tRNA ligase (440 aa).

Tyr46 provides a ligand contact to L-tyrosine. Residues 51 to 60 (PTAASLHIGN) carry the 'HIGH' region motif. Residues Tyr181 and Gln185 each contribute to the L-tyrosine site. The 'KMSKS' region signature appears at 241–245 (KFGKS). Lys244 lines the ATP pocket. The 67-residue stretch at 373–439 (DRVIDAAQAA…GKKALGAVEN (67 aa)) folds into the S4 RNA-binding domain.

This sequence belongs to the class-I aminoacyl-tRNA synthetase family. TyrS type 1 subfamily. As to quaternary structure, homodimer.

The protein resides in the cytoplasm. The enzyme catalyses tRNA(Tyr) + L-tyrosine + ATP = L-tyrosyl-tRNA(Tyr) + AMP + diphosphate + H(+). Its function is as follows. Catalyzes the attachment of tyrosine to tRNA(Tyr) in a two-step reaction: tyrosine is first activated by ATP to form Tyr-AMP and then transferred to the acceptor end of tRNA(Tyr). This Bifidobacterium longum subsp. infantis (strain ATCC 15697 / DSM 20088 / JCM 1222 / NCTC 11817 / S12) protein is Tyrosine--tRNA ligase.